Reading from the N-terminus, the 802-residue chain is Leucine--tRNA ligase (802 aa).

Positions 40–51 match the 'HIGH' region motif; it reads PYPSGAGLHVGH. Residues 576 to 580 carry the 'KMSKS' region motif; sequence KMSKS. An ATP-binding site is contributed by Lys-579.

It belongs to the class-I aminoacyl-tRNA synthetase family.

The protein localises to the cytoplasm. It catalyses the reaction tRNA(Leu) + L-leucine + ATP = L-leucyl-tRNA(Leu) + AMP + diphosphate. This Bacillus cereus (strain ATCC 14579 / DSM 31 / CCUG 7414 / JCM 2152 / NBRC 15305 / NCIMB 9373 / NCTC 2599 / NRRL B-3711) protein is Leucine--tRNA ligase.